Here is a 166-residue protein sequence, read N- to C-terminus: Phospholipase A2 inhibitor clone 06/08 (166 aa).

The N-terminal stretch at 1–19 (MRLILLSGLLLLGIFLANG) is a signal peptide. The 116-residue stretch at 46–161 (LRGAFLTVYK…CDDNLLVVCE (116 aa)) folds into the C-type lectin domain. N-linked (GlcNAc...) asparagine glycans are attached at residues asparagine 61 and asparagine 122. 2 cysteine pairs are disulfide-bonded: cysteine 83/cysteine 160 and cysteine 138/cysteine 152.

It belongs to the alpha-type phospholipase A2 inhibitor family. Homotrimer; non-covalently linked. Expressed by the liver.

Its subcellular location is the secreted. In terms of biological role, this phospholipase A2 inhibitor binds directly phospholipase A2 in the presence or absence of calcium. This Bothrops neuwiedi (Neuwied's lancehead) protein is Phospholipase A2 inhibitor clone 06/08.